The following is a 250-amino-acid chain: 3-deoxy-manno-octulosonate cytidylyltransferase 1 (250 aa).

It belongs to the KdsB family.

The protein localises to the cytoplasm. The enzyme catalyses 3-deoxy-alpha-D-manno-oct-2-ulosonate + CTP = CMP-3-deoxy-beta-D-manno-octulosonate + diphosphate. It functions in the pathway nucleotide-sugar biosynthesis; CMP-3-deoxy-D-manno-octulosonate biosynthesis; CMP-3-deoxy-D-manno-octulosonate from 3-deoxy-D-manno-octulosonate and CTP: step 1/1. It participates in bacterial outer membrane biogenesis; lipopolysaccharide biosynthesis. In terms of biological role, activates KDO (a required 8-carbon sugar) for incorporation into bacterial lipopolysaccharide in Gram-negative bacteria. The sequence is that of 3-deoxy-manno-octulosonate cytidylyltransferase 1 from Actinobacillus pleuropneumoniae serotype 5b (strain L20).